The chain runs to 226 residues: AN1-type zinc finger protein 3 homolog (226 aa).

An A20-type zinc finger spans residues 12-44 (PSLPPRCPCGFWGSSKTMNLCSKCFADFQKKQP). Zn(2+)-binding residues include Cys18, Cys20, Cys32, and Cys35. The segment at 42 to 149 (KQPDEDTAPS…DRPDNSSRSK (108 aa)) is disordered. Polar residues-rich tracts occupy residues 49-59 (APSTSSSQSDL), 67-92 (DNGNTSIPTPTVNPTQQLPTELNVDS), and 105-114 (AHVSLTTPSK). Positions 134-146 (RLLDSGDRPDNSS) are enriched in basic and acidic residues. The segment at 150–199 (QKSRRRCFRCQIKLELVQQELGSCRCGYVFCMLHRLPEQHDCTFDHMGRG) adopts an AN1-type zinc-finger fold. 8 residues coordinate Zn(2+): Cys156, Cys159, Cys173, Cys175, Cys180, His183, His189, and Cys191.

The protein is AN1-type zinc finger protein 3 homolog (zfand3) of Xenopus laevis (African clawed frog).